A 442-amino-acid polypeptide reads, in one-letter code: Zinc finger protein sfp1 (442 aa).

The segment covering 193 to 208 has biased composition (low complexity); that stretch reads AASSDMSSDEASSQAE. Disordered stretches follow at residues 193 to 219 and 304 to 333; these read AASS…MPES and SPFV…HDSP. C2H2-type zinc fingers lie at residues 350–375 and 399–422; these read YKCP…LHGH and YRCE…THSH.

It is found in the cytoplasm. The protein resides in the nucleus. This chain is Zinc finger protein sfp1 (sfp1), found in Schizosaccharomyces pombe (strain 972 / ATCC 24843) (Fission yeast).